A 108-amino-acid polypeptide reads, in one-letter code: Probable 4-amino-4-deoxy-L-arabinose-phosphoundecaprenol flippase subunit ArnE (108 aa).

3 consecutive transmembrane segments (helical) span residues 36 to 56 (SLWL…LVLQ), 58 to 78 (LDVG…TLAG), and 85 to 105 (PVDV…FQLG).

Belongs to the ArnE family. In terms of assembly, heterodimer of ArnE and ArnF.

The protein resides in the cell inner membrane. The protein operates within bacterial outer membrane biogenesis; lipopolysaccharide biosynthesis. In terms of biological role, translocates 4-amino-4-deoxy-L-arabinose-phosphoundecaprenol (alpha-L-Ara4N-phosphoundecaprenol) from the cytoplasmic to the periplasmic side of the inner membrane. This chain is Probable 4-amino-4-deoxy-L-arabinose-phosphoundecaprenol flippase subunit ArnE, found in Pseudomonas syringae pv. syringae (strain B728a).